The following is a 206-amino-acid chain: Transcription factor MYB57 (206 aa).

The span at 1–11 shows a compositional bias: basic residues; sequence METTMKKKGRV. A disordered region spans residues 1 to 20; that stretch reads METTMKKKGRVKATITSQKE. HTH myb-type domains follow at residues 22-74 and 75-129; these read EGTV…LNYL and RPDV…QRHM. 2 DNA-binding regions (H-T-H motif) span residues 50–74 and 102–125; these read WNSV…LNYL and WSKI…RTKI. Positions 138-162 are disordered; sequence NHQHHCSGNSQSSGMTTQGSSGKAI. Residues 144–159 are compositionally biased toward low complexity; that stretch reads SGNSQSSGMTTQGSSG.

As to expression, expressed specifically in flowers.

The protein resides in the nucleus. Functionally, transcription factor acting redundantly with MYB21 and MYB24 to control stamen filament elongation in the late developed flowers. Repressed at the transcript levels by DELLA proteins. This chain is Transcription factor MYB57 (MYB57), found in Arabidopsis thaliana (Mouse-ear cress).